The primary structure comprises 131 residues: Large ribosomal subunit protein bL17 (131 aa).

The protein belongs to the bacterial ribosomal protein bL17 family. Part of the 50S ribosomal subunit. Contacts protein L32.

The protein is Large ribosomal subunit protein bL17 of Thermotoga neapolitana (strain ATCC 49049 / DSM 4359 / NBRC 107923 / NS-E).